A 1101-amino-acid chain; its full sequence is Carbamoyl phosphate synthase large chain (1101 aa).

A carboxyphosphate synthetic domain region spans residues 1–402 (MPKRTDLKSV…ALQKALRSLE (402 aa)). Residues Arg129, Arg169, Gly175, Gly176, Glu208, Ile210, Glu215, Gly241, Val242, His243, Gln285, and Glu299 each contribute to the ATP site. Residues 133–328 (KGVVERAGGE…IAKIATKLAL (196 aa)) form the ATP-grasp 1 domain. Mg(2+) is bound by residues Gln285, Glu299, and Asn301. Residues Gln285, Glu299, and Asn301 each contribute to the Mn(2+) site. The oligomerization domain stretch occupies residues 403–544 (QKGSELAFPQ…YRYSSYDLET (142 aa)). Residues 545–947 (EVAPHEGESV…AFAKSQSAAG (403 aa)) form a carbamoyl phosphate synthetic domain region. One can recognise an ATP-grasp 2 domain in the interval 675–866 (ALVLERAGLV…LAKAAARIGV (192 aa)). The ATP site is built by Arg711, Arg750, Leu752, Glu757, Gly782, Ile783, His784, Ser785, Gln825, and Glu837. Residues Gln825, Glu837, and Asn839 each coordinate Mg(2+). Positions 825, 837, and 839 each coordinate Mn(2+). The MGS-like domain occupies 948-1093 (GPLPTSGRVF…QEHDARLQQA (146 aa)). Positions 948–1101 (GPLPTSGRVF…QAVAGPEAAA (154 aa)) are allosteric domain.

This sequence belongs to the CarB family. In terms of assembly, composed of two chains; the small (or glutamine) chain promotes the hydrolysis of glutamine to ammonia, which is used by the large (or ammonia) chain to synthesize carbamoyl phosphate. Tetramer of heterodimers (alpha,beta)4. The cofactor is Mg(2+). Requires Mn(2+) as cofactor.

It carries out the reaction hydrogencarbonate + L-glutamine + 2 ATP + H2O = carbamoyl phosphate + L-glutamate + 2 ADP + phosphate + 2 H(+). The catalysed reaction is hydrogencarbonate + NH4(+) + 2 ATP = carbamoyl phosphate + 2 ADP + phosphate + 2 H(+). It functions in the pathway amino-acid biosynthesis; L-arginine biosynthesis; carbamoyl phosphate from bicarbonate: step 1/1. The protein operates within pyrimidine metabolism; UMP biosynthesis via de novo pathway; (S)-dihydroorotate from bicarbonate: step 1/3. Its function is as follows. Large subunit of the glutamine-dependent carbamoyl phosphate synthetase (CPSase). CPSase catalyzes the formation of carbamoyl phosphate from the ammonia moiety of glutamine, carbonate, and phosphate donated by ATP, constituting the first step of 2 biosynthetic pathways, one leading to arginine and/or urea and the other to pyrimidine nucleotides. The large subunit (synthetase) binds the substrates ammonia (free or transferred from glutamine from the small subunit), hydrogencarbonate and ATP and carries out an ATP-coupled ligase reaction, activating hydrogencarbonate by forming carboxy phosphate which reacts with ammonia to form carbamoyl phosphate. In Micrococcus luteus (strain ATCC 4698 / DSM 20030 / JCM 1464 / CCM 169 / CCUG 5858 / IAM 1056 / NBRC 3333 / NCIMB 9278 / NCTC 2665 / VKM Ac-2230) (Micrococcus lysodeikticus), this protein is Carbamoyl phosphate synthase large chain.